Consider the following 191-residue polypeptide: Accessory gene regulator protein B (191 aa).

The next 5 helical transmembrane spans lie at 45–65 (IVVY…TVHL), 81–101 (STFA…WILI), 108–128 (IFMI…SPAI), 144–164 (ITAI…KQPF), and 165–185 (NELV…IFFP).

This sequence belongs to the AgrB family.

It localises to the cell membrane. In terms of biological role, essential for the production of a quorum sensing system signal molecule, the autoinducing peptide (AIP). This quorum sensing system is responsible for the regulation of the expression of virulence factor genes. Involved in the proteolytic processing of AgrD, the precursor of AIP. In Staphylococcus carnosus (strain TM300), this protein is Accessory gene regulator protein B.